The sequence spans 468 residues: UDP-N-acetylmuramate--L-alanine ligase (468 aa).

114–120 is a binding site for ATP; the sequence is GTHGKTT.

This sequence belongs to the MurCDEF family.

The protein resides in the cytoplasm. The catalysed reaction is UDP-N-acetyl-alpha-D-muramate + L-alanine + ATP = UDP-N-acetyl-alpha-D-muramoyl-L-alanine + ADP + phosphate + H(+). It functions in the pathway cell wall biogenesis; peptidoglycan biosynthesis. Functionally, cell wall formation. This Methylobacterium radiotolerans (strain ATCC 27329 / DSM 1819 / JCM 2831 / NBRC 15690 / NCIMB 10815 / 0-1) protein is UDP-N-acetylmuramate--L-alanine ligase.